Here is a 177-residue protein sequence, read N- to C-terminus: ATP synthase subunit delta (177 aa).

This sequence belongs to the ATPase delta chain family. F-type ATPases have 2 components, F(1) - the catalytic core - and F(0) - the membrane proton channel. F(1) has five subunits: alpha(3), beta(3), gamma(1), delta(1), epsilon(1). F(0) has three main subunits: a(1), b(2) and c(10-14). The alpha and beta chains form an alternating ring which encloses part of the gamma chain. F(1) is attached to F(0) by a central stalk formed by the gamma and epsilon chains, while a peripheral stalk is formed by the delta and b chains.

It localises to the cell inner membrane. Its function is as follows. F(1)F(0) ATP synthase produces ATP from ADP in the presence of a proton or sodium gradient. F-type ATPases consist of two structural domains, F(1) containing the extramembraneous catalytic core and F(0) containing the membrane proton channel, linked together by a central stalk and a peripheral stalk. During catalysis, ATP synthesis in the catalytic domain of F(1) is coupled via a rotary mechanism of the central stalk subunits to proton translocation. This protein is part of the stalk that links CF(0) to CF(1). It either transmits conformational changes from CF(0) to CF(1) or is implicated in proton conduction. This chain is ATP synthase subunit delta, found in Yersinia enterocolitica serotype O:8 / biotype 1B (strain NCTC 13174 / 8081).